Consider the following 289-residue polypeptide: Release factor glutamine methyltransferase (289 aa).

S-adenosyl-L-methionine is bound by residues 122-126 (GVGSG), Asp-145, Trp-174, and Asn-189. 189-192 (NPPY) contacts substrate.

This sequence belongs to the protein N5-glutamine methyltransferase family. PrmC subfamily.

It catalyses the reaction L-glutaminyl-[peptide chain release factor] + S-adenosyl-L-methionine = N(5)-methyl-L-glutaminyl-[peptide chain release factor] + S-adenosyl-L-homocysteine + H(+). In terms of biological role, methylates the class 1 translation termination release factors RF1/PrfA and RF2/PrfB on the glutamine residue of the universally conserved GGQ motif. The protein is Release factor glutamine methyltransferase of Caulobacter vibrioides (strain ATCC 19089 / CIP 103742 / CB 15) (Caulobacter crescentus).